The primary structure comprises 84 residues: Cytochrome b559 subunit alpha (84 aa).

The chain crosses the membrane as a helical span at residues 22–36; it reads VIHSITIPSLFVAGW. Position 24 (His24) interacts with heme.

Belongs to the PsbE/PsbF family. As to quaternary structure, heterodimer of an alpha subunit and a beta subunit. PSII is composed of 1 copy each of membrane proteins PsbA, PsbB, PsbC, PsbD, PsbE, PsbF, PsbH, PsbI, PsbJ, PsbK, PsbL, PsbM, PsbT, PsbX, PsbY, PsbZ, Psb30/Ycf12, at least 3 peripheral proteins of the oxygen-evolving complex and a large number of cofactors. It forms dimeric complexes. Heme b serves as cofactor.

It localises to the plastid. Its subcellular location is the chloroplast thylakoid membrane. This b-type cytochrome is tightly associated with the reaction center of photosystem II (PSII). PSII is a light-driven water:plastoquinone oxidoreductase that uses light energy to abstract electrons from H(2)O, generating O(2) and a proton gradient subsequently used for ATP formation. It consists of a core antenna complex that captures photons, and an electron transfer chain that converts photonic excitation into a charge separation. The sequence is that of Cytochrome b559 subunit alpha from Gracilaria tenuistipitata var. liui (Red alga).